The sequence spans 294 residues: Probable endonuclease 4 (294 aa).

Residues His78, His118, Glu157, Asp191, His194, His228, Asp241, His243, and Glu273 each coordinate Zn(2+).

The protein belongs to the AP endonuclease 2 family. Zn(2+) is required as a cofactor.

The enzyme catalyses Endonucleolytic cleavage to 5'-phosphooligonucleotide end-products.. In terms of biological role, endonuclease IV plays a role in DNA repair. It cleaves phosphodiester bonds at apurinic or apyrimidinic (AP) sites, generating a 3'-hydroxyl group and a 5'-terminal sugar phosphate. This is Probable endonuclease 4 from Streptomyces coelicolor (strain ATCC BAA-471 / A3(2) / M145).